The following is a 1397-amino-acid chain: Ankyrin repeat domain-containing protein 30A (1397 aa).

ANK repeat units follow at residues 72 to 101 (QKRT…QLDV), 105 to 134 (EHRT…DINL), 138 to 167 (YGNT…VIEV), 171 to 200 (ASLT…NANA), 204 to 233 (YKCT…DVFA), and 237 to 271 (CGVT…HQNT). Polar residues predominate over residues 267-279 (NHQNTNPEGTSAG). Disordered stretches follow at residues 267 to 376 (NHQN…TWPA), 453 to 482 (PTKE…EYSC), 782 to 807 (QTLR…WDSE), and 902 to 931 (TLRA…LRET). Basic and acidic residues-rich tracts occupy residues 290–304 (RTPD…KTPD) and 312–326 (RTPD…KTPD). Residues 455 to 467 (KESSTKASANDQR) are compositionally biased toward polar residues. Basic and acidic residues-rich tracts occupy residues 782-800 (QTLR…KDYE) and 913-931 (SKQK…LRET). 2 coiled-coil regions span residues 998 to 1188 (VLKK…KQDK) and 1282 to 1327 (EHAQ…FQLQ).

Mainly expressed in breast and testis. A very faint signal is detected in placenta. Also expressed in many breast cancer cells.

This is Ankyrin repeat domain-containing protein 30A (ANKRD30A) from Homo sapiens (Human).